A 367-amino-acid polypeptide reads, in one-letter code: tRNA pseudouridine synthase D (367 aa).

The Nucleophile role is filled by Asp-80. Positions 156–316 constitute a TRUD domain; it reads GIPNWFGEQR…LKQERRALRL (161 aa).

It belongs to the pseudouridine synthase TruD family.

It catalyses the reaction uridine(13) in tRNA = pseudouridine(13) in tRNA. Functionally, responsible for synthesis of pseudouridine from uracil-13 in transfer RNAs. The polypeptide is tRNA pseudouridine synthase D (Xanthomonas campestris pv. campestris (strain 8004)).